The chain runs to 317 residues: Transaldolase (317 aa).

Lys126 functions as the Schiff-base intermediate with substrate in the catalytic mechanism.

Belongs to the transaldolase family. Type 1 subfamily. As to quaternary structure, homodimer.

It is found in the cytoplasm. It carries out the reaction D-sedoheptulose 7-phosphate + D-glyceraldehyde 3-phosphate = D-erythrose 4-phosphate + beta-D-fructose 6-phosphate. Its pathway is carbohydrate degradation; pentose phosphate pathway; D-glyceraldehyde 3-phosphate and beta-D-fructose 6-phosphate from D-ribose 5-phosphate and D-xylulose 5-phosphate (non-oxidative stage): step 2/3. Its function is as follows. Transaldolase is important for the balance of metabolites in the pentose-phosphate pathway. The chain is Transaldolase from Paraburkholderia phytofirmans (strain DSM 17436 / LMG 22146 / PsJN) (Burkholderia phytofirmans).